The chain runs to 128 residues: MRPVASFRPPPTFSALQGGASSQATKTAGIDQRGTNQAFSLLDPQSTQSNSTDSSFGEMGNLLMNQVKGVNSMQNQADSMVHSMLTGGDVNEAEVLTSVQKADLAFRMLMQIRNKLMDAYREIQQVQI.

Residues 1–60 (MRPVASFRPPPTFSALQGGASSQATKTAGIDQRGTNQAFSLLDPQSTQSNSTDSSFGEMG) are disordered. Residues 33 to 55 (RGTNQAFSLLDPQSTQSNSTDSS) are compositionally biased toward polar residues.

It belongs to the FliE family.

It localises to the bacterial flagellum basal body. This chain is Flagellar hook-basal body complex protein FliE, found in Rhodopirellula baltica (strain DSM 10527 / NCIMB 13988 / SH1).